The following is a 482-amino-acid chain: UDP-glucose 6-dehydrogenase 2 (482 aa).

Residues 8-13 (GAGYVG), Asp-33, Arg-38, 86-90 (VNTPT), 127-128 (ST), and Glu-163 contribute to the NAD(+) site. Substrate-binding positions include 159-163 (EFLAE), 218-225 (KLAANAFL), and 258-271 (RIGP…VGFG). The Nucleophile role is filled by Cys-274. 274–277 (CFQK) serves as a coordination point for NAD(+). 336 to 337 (FK) serves as a coordination point for substrate. Arg-344 is an NAD(+) binding site. Phosphoserine is present on Ser-395. Arg-449 serves as a coordination point for substrate.

It belongs to the UDP-glucose/GDP-mannose dehydrogenase family.

The catalysed reaction is UDP-alpha-D-glucose + 2 NAD(+) + H2O = UDP-alpha-D-glucuronate + 2 NADH + 3 H(+). Its pathway is nucleotide-sugar biosynthesis; UDP-alpha-D-glucuronate biosynthesis; UDP-alpha-D-glucuronate from UDP-alpha-D-glucose: step 1/1. Involved in the biosynthesis of UDP-glucuronic acid (UDP-GlcA), providing nucleotide sugars for cell-wall polymers. In Oryza sativa subsp. japonica (Rice), this protein is UDP-glucose 6-dehydrogenase 2 (UGD2).